Here is a 487-residue protein sequence, read N- to C-terminus: N-succinylglutamate 5-semialdehyde dehydrogenase (487 aa).

221–226 (GSSDTG) provides a ligand contact to NAD(+). Active-site residues include glutamate 244 and cysteine 278.

The protein belongs to the aldehyde dehydrogenase family. AstD subfamily.

It carries out the reaction N-succinyl-L-glutamate 5-semialdehyde + NAD(+) + H2O = N-succinyl-L-glutamate + NADH + 2 H(+). It functions in the pathway amino-acid degradation; L-arginine degradation via AST pathway; L-glutamate and succinate from L-arginine: step 4/5. Catalyzes the NAD-dependent reduction of succinylglutamate semialdehyde into succinylglutamate. The chain is N-succinylglutamate 5-semialdehyde dehydrogenase from Burkholderia ambifaria (strain ATCC BAA-244 / DSM 16087 / CCUG 44356 / LMG 19182 / AMMD) (Burkholderia cepacia (strain AMMD)).